The chain runs to 364 residues: Chorismate synthase (364 aa).

Arg-48 and Arg-54 together coordinate NADP(+). FMN-binding positions include 125–127 (RSS), 238–239 (NA), Gly-278, 293–297 (KPTSS), and Arg-319.

The protein belongs to the chorismate synthase family. As to quaternary structure, homotetramer. The cofactor is FMNH2.

It catalyses the reaction 5-O-(1-carboxyvinyl)-3-phosphoshikimate = chorismate + phosphate. It functions in the pathway metabolic intermediate biosynthesis; chorismate biosynthesis; chorismate from D-erythrose 4-phosphate and phosphoenolpyruvate: step 7/7. Its function is as follows. Catalyzes the anti-1,4-elimination of the C-3 phosphate and the C-6 proR hydrogen from 5-enolpyruvylshikimate-3-phosphate (EPSP) to yield chorismate, which is the branch point compound that serves as the starting substrate for the three terminal pathways of aromatic amino acid biosynthesis. This reaction introduces a second double bond into the aromatic ring system. The chain is Chorismate synthase from Shewanella frigidimarina (strain NCIMB 400).